The primary structure comprises 444 residues: Adenylosuccinate synthetase (444 aa).

GTP contacts are provided by residues Gly-13 to Lys-19 and Gly-41 to Thr-43. Asp-14 (proton acceptor) is an active-site residue. Residues Asp-14 and Gly-41 each coordinate Mg(2+). Residues Asp-14 to Lys-17, Asn-39 to His-42, Thr-129, Arg-143, Gln-224, Thr-239, and Arg-303 contribute to the IMP site. His-42 (proton donor) is an active-site residue. Substrate is bound at residue Thr-299–Arg-305. Residues Arg-305, Lys-331–Asp-333, and Ser-413–Gly-415 contribute to the GTP site.

This sequence belongs to the adenylosuccinate synthetase family. Homodimer. Mg(2+) is required as a cofactor.

The protein localises to the cytoplasm. It carries out the reaction IMP + L-aspartate + GTP = N(6)-(1,2-dicarboxyethyl)-AMP + GDP + phosphate + 2 H(+). It functions in the pathway purine metabolism; AMP biosynthesis via de novo pathway; AMP from IMP: step 1/2. Functionally, plays an important role in the de novo pathway of purine nucleotide biosynthesis. Catalyzes the first committed step in the biosynthesis of AMP from IMP. The sequence is that of Adenylosuccinate synthetase from Synechocystis sp. (strain ATCC 27184 / PCC 6803 / Kazusa).